The primary structure comprises 300 residues: Ribonuclease HIII (300 aa).

Residues 86 to 300 (RPRLGVDESG…FNEICDSASA (215 aa)) form the RNase H type-2 domain. Positions 92, 93, and 196 each coordinate a divalent metal cation.

Belongs to the RNase HII family. RnhC subfamily. It depends on Mn(2+) as a cofactor. Requires Mg(2+) as cofactor.

The protein resides in the cytoplasm. It catalyses the reaction Endonucleolytic cleavage to 5'-phosphomonoester.. In terms of biological role, endonuclease that specifically degrades the RNA of RNA-DNA hybrids. The protein is Ribonuclease HIII of Chlamydia caviae (strain ATCC VR-813 / DSM 19441 / 03DC25 / GPIC) (Chlamydophila caviae).